The following is a 453-amino-acid chain: Chromosomal replication initiator protein DnaA (453 aa).

The domain I, interacts with DnaA modulators stretch occupies residues Met1–Ala78. Residues Ala78–Ser112 form a domain II region. A domain III, AAA+ region region spans residues Asn113–Ala331. 4 residues coordinate ATP: Gly157, Gly159, Lys160, and Thr161. A domain IV, binds dsDNA region spans residues Asp332–Arg453.

It belongs to the DnaA family. In terms of assembly, oligomerizes as a right-handed, spiral filament on DNA at oriC.

The protein localises to the cytoplasm. In terms of biological role, plays an essential role in the initiation and regulation of chromosomal replication. ATP-DnaA binds to the origin of replication (oriC) to initiate formation of the DNA replication initiation complex once per cell cycle. Binds the DnaA box (a 9 base pair repeat at the origin) and separates the double-stranded (ds)DNA. Forms a right-handed helical filament on oriC DNA; dsDNA binds to the exterior of the filament while single-stranded (ss)DNA is stabiized in the filament's interior. The ATP-DnaA-oriC complex binds and stabilizes one strand of the AT-rich DNA unwinding element (DUE), permitting loading of DNA polymerase. After initiation quickly degrades to an ADP-DnaA complex that is not apt for DNA replication. Binds acidic phospholipids. This Streptococcus agalactiae serotype Ia (strain ATCC 27591 / A909 / CDC SS700) protein is Chromosomal replication initiator protein DnaA.